The sequence spans 102 residues: Small ribosomal subunit protein uS10 (102 aa).

This sequence belongs to the universal ribosomal protein uS10 family. In terms of assembly, part of the 30S ribosomal subunit.

Functionally, involved in the binding of tRNA to the ribosomes. This Methanoregula boonei (strain DSM 21154 / JCM 14090 / 6A8) protein is Small ribosomal subunit protein uS10.